Here is a 373-residue protein sequence, read N- to C-terminus: Protodeoxyviolaceinate monooxygenase (373 aa).

2–20 serves as a coordination point for FAD; it reads KILVIGAGPAGLVFASQLK.

FAD is required as a cofactor.

It catalyses the reaction protodeoxyviolaceinate + NADH + O2 + H(+) = protoviolaceinate + NAD(+) + H2O. It carries out the reaction protodeoxyviolaceinate + NADPH + O2 + H(+) = protoviolaceinate + NADP(+) + H2O. It participates in pigment biosynthesis; violacein biosynthesis. Catalyzes the oxygenation of the 6-position of protodeoxyviolaceinate to form proviolacein. The sequence is that of Protodeoxyviolaceinate monooxygenase (vioD) from Chromobacterium violaceum (strain ATCC 12472 / DSM 30191 / JCM 1249 / CCUG 213 / NBRC 12614 / NCIMB 9131 / NCTC 9757 / MK).